Consider the following 167-residue polypeptide: Small ribosomal subunit protein uS5 (167 aa).

Residues 12 to 75 enclose the S5 DRBM domain; sequence LQEKLVQVNR…EAARRNMIQV (64 aa).

Belongs to the universal ribosomal protein uS5 family. As to quaternary structure, part of the 30S ribosomal subunit. Contacts proteins S4 and S8.

Its function is as follows. With S4 and S12 plays an important role in translational accuracy. Located at the back of the 30S subunit body where it stabilizes the conformation of the head with respect to the body. The chain is Small ribosomal subunit protein uS5 from Alcanivorax borkumensis (strain ATCC 700651 / DSM 11573 / NCIMB 13689 / SK2).